Here is a 340-residue protein sequence, read N- to C-terminus: MGASPSRPLEQSPSSSEGENHRVKYASYTTQGFRPHMEDALAVELDLDATTSFFGVYDGHGGAEVAMYCAKRFHTMLLEDVDYINNLPNAITSVCFRLDDDLQRSNEWRESLNPCANRNCLTNICANLHHFTEDYVPPSYEGSTACVVIIRGNQIIVGNVGDSRCVLSKNGQAISLSFDHKPHHEAERERIQRAGGHVFLQRILGMLATSRAIGDFAYKQNRNMPPSQQMVTCVPDIRVENITDDTEFLVIASDGVWDGMRNNNVVQFVRQELRPGEENLRETCEKLVGHCLHSNDNATAILVKFKPIEEDPDEVASARDEHQHNPEGGDEKLDINNDND.

The tract at residues 1–21 (MGASPSRPLEQSPSSSEGENH) is disordered. Residues 24–305 (KYASYTTQGF…DNATAILVKF (282 aa)) enclose the PPM-type phosphatase domain. Mn(2+) is bound by residues aspartate 58, glycine 59, aspartate 254, and aspartate 296. A disordered region spans residues 311-340 (DPDEVASARDEHQHNPEGGDEKLDINNDND). Positions 316–340 (ASARDEHQHNPEGGDEKLDINNDND) are enriched in basic and acidic residues.

Belongs to the PP2C family. It depends on Mg(2+) as a cofactor. Mn(2+) is required as a cofactor.

The enzyme catalyses O-phospho-L-seryl-[protein] + H2O = L-seryl-[protein] + phosphate. It carries out the reaction O-phospho-L-threonyl-[protein] + H2O = L-threonyl-[protein] + phosphate. In Oryza sativa subsp. japonica (Rice), this protein is Probable protein phosphatase 2C 21.